We begin with the raw amino-acid sequence, 123 residues long: Large ribosomal subunit protein bL19 (123 aa).

This sequence belongs to the bacterial ribosomal protein bL19 family.

Its function is as follows. This protein is located at the 30S-50S ribosomal subunit interface and may play a role in the structure and function of the aminoacyl-tRNA binding site. In Ureaplasma urealyticum serovar 10 (strain ATCC 33699 / Western), this protein is Large ribosomal subunit protein bL19.